An 800-amino-acid chain; its full sequence is Putative antiporter subunit mnhA2 (800 aa).

A run of 21 helical transmembrane segments spans residues 3–23, 29–49, 78–98, 109–129, 133–153, 167–187, 202–222, 249–269, 273–293, 300–320, 337–357, 387–407, 428–448, 472–492, 527–547, 596–616, 627–647, 651–671, 676–696, 712–732, and 768–788; these read LVYLLGGLIVIMLIVLMTLFI, FAGYIALLAPILASGYFLAQI, GLGLMFGLIISIIGVAVFFYA, LPRFFLYLLLFMFSMLGIVVS, ILMYVFWELTSVSSFLLISYW, FIITVLGGLALLTGFIMLYII, SISEHALFIPMMIMLLIGAFT, SATMVKAGIFLLFKFTPILGL, YIYIVTFVGLITMIFGSVTAL, GILAYSTISQLGMIMSMVGLG, LILFAGLFHLMNHAIFKCALF, LVMTLAALSMAGVPLLNGFLS, LTIIVVAIGVIASIFTFVYAV, PWLFSLPAIILMVMIPIIFFI, GVNLPLIFSVIVIIVGLILAL, IITVLIFSILIAYGIFQVGLP, GPLEVILGIMISVVGIALVFI, LTMVILNGIIGYSVALFFLLM, LALTQLVVETITTILFIVSFS, TIKIIVSFIMAGAVVTLIFIA, and LDTMFEGIVLIIAGLGIYTLL.

This sequence belongs to the CPA3 antiporters (TC 2.A.63) subunit A family. In terms of assembly, may form a heterooligomeric complex that consists of seven subunits: mnhA2, mnhB2, mnhC2, mnhD2, mnhE2, mnhF2 and mnhG2.

It localises to the cell membrane. This is Putative antiporter subunit mnhA2 (mnhA2) from Staphylococcus haemolyticus (strain JCSC1435).